We begin with the raw amino-acid sequence, 312 residues long: Light-independent protochlorophyllide reductase iron-sulfur ATP-binding protein (312 aa).

Residues 55–60 (GIGKST) and Lys-84 each bind ATP. Ser-59 serves as a coordination point for Mg(2+). Residues Cys-140 and Cys-174 each coordinate [4Fe-4S] cluster. Residues 225–226 (NR) and 249–251 (PDL) each bind ATP.

It belongs to the NifH/BchL/ChlL family. In terms of assembly, homodimer. Protochlorophyllide reductase is composed of three subunits; BchL, BchN and BchB. [4Fe-4S] cluster is required as a cofactor.

The enzyme catalyses chlorophyllide a + oxidized 2[4Fe-4S]-[ferredoxin] + 2 ADP + 2 phosphate = protochlorophyllide a + reduced 2[4Fe-4S]-[ferredoxin] + 2 ATP + 2 H2O. It functions in the pathway porphyrin-containing compound metabolism; bacteriochlorophyll biosynthesis (light-independent). Functionally, component of the dark-operative protochlorophyllide reductase (DPOR) that uses Mg-ATP and reduced ferredoxin to reduce ring D of protochlorophyllide (Pchlide) to form chlorophyllide a (Chlide). This reaction is light-independent. The L component serves as a unique electron donor to the NB-component of the complex, and binds Mg-ATP. This Rhodopseudomonas palustris (strain ATCC BAA-98 / CGA009) protein is Light-independent protochlorophyllide reductase iron-sulfur ATP-binding protein.